The primary structure comprises 633 residues: Kinesin-like motor protein 9 (633 aa).

One can recognise a Kinesin motor domain in the interval 1–392 (MIQIFLRVKK…MRYSANAREI (392 aa)). ATP is bound at residue 94–101 (GVSGAGKT). Disordered stretches follow at residues 393 to 423 (LPPPLNENSGSQSPSHSLLQKSKNTSSTKAL), 531 to 556 (LEEESIKESSATQQNENQHKRSSRKL), and 575 to 633 (KLWP…INEL). Polar residues predominate over residues 398 to 423 (NENSGSQSPSHSLLQKSKNTSSTKAL). Positions 417–541 (TSSTKALTSH…EEESIKESSA (125 aa)) form a coiled coil. The segment covering 578–587 (PQSTLIQAPN) has biased composition (polar residues). Over residues 604–623 (VSPIKPLSPSRRPPLTSLYS) the composition is skewed to low complexity. A phosphoserine mark is found at Ser-605, Ser-611, and Ser-613. Polar residues predominate over residues 624-633 (GTTDIDINEL).

It belongs to the TRAFAC class myosin-kinesin ATPase superfamily. Kinesin family. Interacts with ase1. Post-translationally, phosphorylated by cdc2 and dephosphorylated by clp1. Dephosphorylation is required for the interaction with ase1.

It localises to the nucleus. Its subcellular location is the cytoplasm. The protein localises to the cytoskeleton. The protein resides in the microtubule organizing center. It is found in the spindle pole body. Functionally, kinesin-like motor protein involved in anaphase B spindle elongation. The chain is Kinesin-like motor protein 9 (klp9) from Schizosaccharomyces pombe (strain 972 / ATCC 24843) (Fission yeast).